A 468-amino-acid polypeptide reads, in one-letter code: ATP synthase subunit beta 1 (468 aa).

An ATP-binding site is contributed by 151-158 (GGAGVGKT).

This sequence belongs to the ATPase alpha/beta chains family. In terms of assembly, F-type ATPases have 2 components, CF(1) - the catalytic core - and CF(0) - the membrane proton channel. CF(1) has five subunits: alpha(3), beta(3), gamma(1), delta(1), epsilon(1). CF(0) has three main subunits: a(1), b(2) and c(9-12). The alpha and beta chains form an alternating ring which encloses part of the gamma chain. CF(1) is attached to CF(0) by a central stalk formed by the gamma and epsilon chains, while a peripheral stalk is formed by the delta and b chains.

The protein localises to the cell inner membrane. The enzyme catalyses ATP + H2O + 4 H(+)(in) = ADP + phosphate + 5 H(+)(out). Functionally, produces ATP from ADP in the presence of a proton gradient across the membrane. The catalytic sites are hosted primarily by the beta subunits. The polypeptide is ATP synthase subunit beta 1 (Photobacterium profundum (strain SS9)).